We begin with the raw amino-acid sequence, 298 residues long: Bifunctional protein FolD (298 aa).

NADP(+) contacts are provided by residues 166 to 168 (GRS), Ser191, and Ile232.

It belongs to the tetrahydrofolate dehydrogenase/cyclohydrolase family. As to quaternary structure, homodimer.

The catalysed reaction is (6R)-5,10-methylene-5,6,7,8-tetrahydrofolate + NADP(+) = (6R)-5,10-methenyltetrahydrofolate + NADPH. The enzyme catalyses (6R)-5,10-methenyltetrahydrofolate + H2O = (6R)-10-formyltetrahydrofolate + H(+). It participates in one-carbon metabolism; tetrahydrofolate interconversion. Its function is as follows. Catalyzes the oxidation of 5,10-methylenetetrahydrofolate to 5,10-methenyltetrahydrofolate and then the hydrolysis of 5,10-methenyltetrahydrofolate to 10-formyltetrahydrofolate. The chain is Bifunctional protein FolD from Parvibaculum lavamentivorans (strain DS-1 / DSM 13023 / NCIMB 13966).